Here is a 262-residue protein sequence, read N- to C-terminus: Glycoprotein gp2 (262 aa).

Residues 1–45 (RRGSPQGGSHTTPHPDRLTPSPDDTYDDDTNHPNGRNNSIEIVPQ) are disordered.

It is found in the virion membrane. Functionally, virulence factor. The polypeptide is Glycoprotein gp2 (Equus caballus (Horse)).